The primary structure comprises 295 residues: THO complex subunit 4C (295 aa).

A disordered region spans residues 1–67 (MSDALNMTLD…GPLAVNTRPS (67 aa)). N-acetylserine is present on S2. Positions 11 to 22 (EIVKKSKSERSA) are enriched in basic and acidic residues. Residues 38–55 (GRGGPNGVVGGGRGGGPV) are compositionally biased toward gly residues. The RRM domain maps to 107–184 (TTVYITNLDQ…RPMKLEILGG (78 aa)). Residues 212 to 295 (QGVRGGRVGR…SYHAEAMNIS (84 aa)) are disordered. Gly residues-rich tracts occupy residues 213 to 227 (GVRG…GSGP) and 242 to 267 (VTAG…SGGR). Residues 271 to 288 (KPVEKSAADLDKDLESYH) show a composition bias toward basic and acidic residues.

This sequence belongs to the ALYREF family. In terms of assembly, interacts with PARP1.

The protein localises to the nucleus. It is found in the nucleoplasm. Its subcellular location is the nucleolus. Functionally, export adapter involved in nuclear export of spliced and unspliced mRNA. The protein is THO complex subunit 4C of Arabidopsis thaliana (Mouse-ear cress).